Consider the following 384-residue polypeptide: Flap endonuclease 1 (384 aa).

An N-domain region spans residues 1-105 (MGVKGLNQLI…GELEKRLLKR (105 aa)). Asp-34 contributes to the Mg(2+) binding site. Arg-47 and Arg-71 together coordinate DNA. Asp-87, Glu-159, Glu-161, Asp-180, and Asp-182 together coordinate Mg(2+). Residues 123–254 (DMTKYQKRLV…VTAYKLIKEH (132 aa)) form an I-domain region. Position 159 (Glu-159) interacts with DNA. DNA is bound by residues Gly-232 and Asp-234. Asp-234 provides a ligand contact to Mg(2+). The interaction with PCNA stretch occupies residues 341–349 (IQGRLDGFF). The disordered stretch occupies residues 354–384 (KYSNTSPLGKDDKKRKTNDKKGAAAKKTKRR). Over residues 362–375 (GKDDKKRKTNDKKG) the composition is skewed to basic and acidic residues.

It belongs to the XPG/RAD2 endonuclease family. FEN1 subfamily. As to quaternary structure, interacts with PCNA. Three molecules of FEN1 bind to one PCNA trimer with each molecule binding to one PCNA monomer. PCNA stimulates the nuclease activity without altering cleavage specificity. The cofactor is Mg(2+). Post-translationally, phosphorylated. Phosphorylation upon DNA damage induces relocalization to the nuclear plasma.

The protein resides in the nucleus. Its subcellular location is the nucleolus. The protein localises to the nucleoplasm. It localises to the mitochondrion. Structure-specific nuclease with 5'-flap endonuclease and 5'-3' exonuclease activities involved in DNA replication and repair. During DNA replication, cleaves the 5'-overhanging flap structure that is generated by displacement synthesis when DNA polymerase encounters the 5'-end of a downstream Okazaki fragment. It enters the flap from the 5'-end and then tracks to cleave the flap base, leaving a nick for ligation. Also involved in the long patch base excision repair (LP-BER) pathway, by cleaving within the apurinic/apyrimidinic (AP) site-terminated flap. Acts as a genome stabilization factor that prevents flaps from equilibrating into structures that lead to duplications and deletions. Also possesses 5'-3' exonuclease activity on nicked or gapped double-stranded DNA, and exhibits RNase H activity. Also involved in replication and repair of rDNA and in repairing mitochondrial DNA. This is Flap endonuclease 1 from Lodderomyces elongisporus (strain ATCC 11503 / CBS 2605 / JCM 1781 / NBRC 1676 / NRRL YB-4239) (Yeast).